Reading from the N-terminus, the 695-residue chain is Elongation factor G (695 aa).

Residues 12–286 (DKLRNIGIMA…AVIDYLPSPL (275 aa)) form the tr-type G domain. GTP is bound by residues 21–28 (AHIDAGKT), 85–89 (DTPGH), and 139–142 (NKMD).

The protein belongs to the TRAFAC class translation factor GTPase superfamily. Classic translation factor GTPase family. EF-G/EF-2 subfamily.

The protein localises to the cytoplasm. Its function is as follows. Catalyzes the GTP-dependent ribosomal translocation step during translation elongation. During this step, the ribosome changes from the pre-translocational (PRE) to the post-translocational (POST) state as the newly formed A-site-bound peptidyl-tRNA and P-site-bound deacylated tRNA move to the P and E sites, respectively. Catalyzes the coordinated movement of the two tRNA molecules, the mRNA and conformational changes in the ribosome. This chain is Elongation factor G, found in Thermotoga petrophila (strain ATCC BAA-488 / DSM 13995 / JCM 10881 / RKU-1).